We begin with the raw amino-acid sequence, 167 residues long: MMINEQIRAREVRLVGANGDQLGIKSRNDALDLAANLNLDLVLVAPNAKPPVCRIMDYGKFRFEQQKKEKEQRKNQKVISMKEVRLSPTIDEHDFNTKLRNAIKFLEKGDKVKASIRFKGRAITHKEIGQRVLDRFSEACAEVSTVESKPKMEGRSMFLVLAPKNDK.

It belongs to the IF-3 family. Monomer.

It is found in the cytoplasm. In terms of biological role, IF-3 binds to the 30S ribosomal subunit and shifts the equilibrium between 70S ribosomes and their 50S and 30S subunits in favor of the free subunits, thus enhancing the availability of 30S subunits on which protein synthesis initiation begins. This is Translation initiation factor IF-3 from Bacillus cereus (strain ATCC 14579 / DSM 31 / CCUG 7414 / JCM 2152 / NBRC 15305 / NCIMB 9373 / NCTC 2599 / NRRL B-3711).